We begin with the raw amino-acid sequence, 111 residues long: Large ribosomal subunit protein uL24 (111 aa).

Belongs to the universal ribosomal protein uL24 family. Part of the 50S ribosomal subunit.

Functionally, one of two assembly initiator proteins, it binds directly to the 5'-end of the 23S rRNA, where it nucleates assembly of the 50S subunit. In terms of biological role, one of the proteins that surrounds the polypeptide exit tunnel on the outside of the subunit. In Cytophaga hutchinsonii (strain ATCC 33406 / DSM 1761 / CIP 103989 / NBRC 15051 / NCIMB 9469 / D465), this protein is Large ribosomal subunit protein uL24.